Consider the following 338-residue polypeptide: Glycerol-3-phosphate dehydrogenase [NAD(P)+] (338 aa).

Residues Ser-11, Trp-12, His-32, Arg-33, and Lys-106 each coordinate NADPH. Lys-106, Gly-137, and Ser-139 together coordinate sn-glycerol 3-phosphate. Ala-141 is an NADPH binding site. Sn-glycerol 3-phosphate contacts are provided by Lys-192, Asp-245, Ser-255, Arg-256, and Asn-257. Lys-192 serves as the catalytic Proton acceptor. Arg-256 provides a ligand contact to NADPH. Positions 280 and 282 each coordinate NADPH.

This sequence belongs to the NAD-dependent glycerol-3-phosphate dehydrogenase family.

The protein localises to the cytoplasm. It catalyses the reaction sn-glycerol 3-phosphate + NAD(+) = dihydroxyacetone phosphate + NADH + H(+). It carries out the reaction sn-glycerol 3-phosphate + NADP(+) = dihydroxyacetone phosphate + NADPH + H(+). Its pathway is membrane lipid metabolism; glycerophospholipid metabolism. In terms of biological role, catalyzes the reduction of the glycolytic intermediate dihydroxyacetone phosphate (DHAP) to sn-glycerol 3-phosphate (G3P), the key precursor for phospholipid synthesis. The polypeptide is Glycerol-3-phosphate dehydrogenase [NAD(P)+] (Lysinibacillus sphaericus (strain C3-41)).